A 275-amino-acid polypeptide reads, in one-letter code: NAD(P)H dehydrogenase [quinone] 1 (275 aa).

FAD contacts are provided by residues histidine 13, 19–20, and glutamine 68; that span reads FN. The residue at position 83 (serine 83) is a Phosphoserine. Position 105–108 (105–108) interacts with FAD; the sequence is LQWF. 127-129 contacts substrate; sequence AYT. FAD is bound by residues 149–152, tyrosine 157, and arginine 202; that span reads TTGG. The segment at 226-275 is important for apoenzyme conformational stability; sequence PSSLFDLNFQAGFLLKKEIEDEQKNNKYGLSVGHHLGKPIPTDNQIKARK. Residue lysine 252 forms a Glycyl lysine isopeptide (Lys-Gly) (interchain with G-Cter in SUMO2) linkage.

The protein belongs to the NAD(P)H dehydrogenase (quinone) family. As to quaternary structure, homodimer. Interacts with PDLIM4 isoform 2; this interaction stabilizes PDLIM4 isoform 2 in response to oxidative stress and protects it from ubiquitin-independent degradation by the core 20S proteasome. Interacts with TP73 (via SAM domain); this interaction is NADH-dependent, stabilizes TP73 in response to oxidative stress and protects it from ubiquitin-independent degradation by the 20S proteasome. Interacts with TP53; this interaction is NADH-dependent, stabilizes TP53 in response to oxidative stress and protects it from ubiquitin-independent degradation by the 20S proteasome. FAD is required as a cofactor.

The protein resides in the cytoplasm. It localises to the cytosol. It catalyses the reaction a quinone + NADH + H(+) = a quinol + NAD(+). It carries out the reaction a quinone + NADPH + H(+) = a quinol + NADP(+). The enzyme catalyses ubiquinone-10 + NADH + H(+) = ubiquinol-10 + NAD(+). The catalysed reaction is menadione + NADH + H(+) = menadiol + NAD(+). Flavin-containing quinone reductase that catalyzes two-electron reduction of quinones to hydroquinones using either NADH or NADPH as electron donors. In a ping-pong kinetic mechanism, the electrons are sequentially transferred from NAD(P)H to flavin cofactor and then from reduced flavin to the quinone, bypassing the formation of semiquinone and reactive oxygen species. Regulates cellular redox state primarily through quinone detoxification. Reduces components of plasma membrane redox system such as coenzyme Q and vitamin quinones, producing antioxidant hydroquinone forms. In the process may function as superoxide scavenger to prevent hydroquinone oxidation and facilitate excretion. Alternatively, can activate quinones and their derivatives by generating redox reactive hydroquinones with DNA cross-linking antitumor potential. Acts as a gatekeeper of the core 20S proteasome known to degrade proteins with unstructured regions. Upon oxidative stress, interacts with tumor suppressors TP53 and TP73 in a NADH-dependent way and inhibits their ubiquitin-independent degradation by the 20S proteasome. In Cavia porcellus (Guinea pig), this protein is NAD(P)H dehydrogenase [quinone] 1 (NQO1).